The sequence spans 508 residues: Lysine--tRNA ligase (508 aa).

The Mg(2+) site is built by E418 and E425.

Belongs to the class-II aminoacyl-tRNA synthetase family. In terms of assembly, homodimer. Requires Mg(2+) as cofactor.

Its subcellular location is the cytoplasm. The enzyme catalyses tRNA(Lys) + L-lysine + ATP = L-lysyl-tRNA(Lys) + AMP + diphosphate. This Burkholderia pseudomallei (strain K96243) protein is Lysine--tRNA ligase.